Reading from the N-terminus, the 234-residue chain is Orotidine 5'-phosphate decarboxylase (234 aa).

Residues D10, K31, 58-67 (DLKLHDIPNT), T121, R183, Q192, G212, and R213 contribute to the substrate site. Residue K60 is the Proton donor of the active site.

It belongs to the OMP decarboxylase family. Type 1 subfamily. As to quaternary structure, homodimer.

The catalysed reaction is orotidine 5'-phosphate + H(+) = UMP + CO2. Its pathway is pyrimidine metabolism; UMP biosynthesis via de novo pathway; UMP from orotate: step 2/2. Functionally, catalyzes the decarboxylation of orotidine 5'-monophosphate (OMP) to uridine 5'-monophosphate (UMP). The polypeptide is Orotidine 5'-phosphate decarboxylase (Lysinibacillus sphaericus (strain C3-41)).